Reading from the N-terminus, the 319-residue chain is ADP-ribosyl cyclase/cyclic ADP-ribose hydrolase 2 (319 aa).

A signal peptide spans 1-33 (MAVQACALSLRLGLWMSLLLPVLPGAGARAAGA). 3 cysteine pairs are disulfide-bonded: cysteine 52/cysteine 68, cysteine 84/cysteine 164, and cysteine 145/cysteine 158. 2 N-linked (GlcNAc...) asparagine glycosylation sites follow: asparagine 67 and asparagine 96. Tryptophan 110 contacts NAD(+). Tryptophan 110 is a binding site for nicotinamide. N-linked (GlcNAc...) asparagine glycosylation occurs at asparagine 149. Tryptophan 173 provides a ligand contact to NAD(+). A glycan (N-linked (GlcNAc...) asparagine) is linked at asparagine 193. Glutamate 211 is an NAD(+) binding site. Disulfide bonds link cysteine 239-cysteine 260 and cysteine 272-cysteine 281. The GPI-anchor amidated serine moiety is linked to residue serine 294. Positions 295-319 (PALHAIGDISLIISLLVALASSSQA) are excised as a propeptide.

The protein belongs to the ADP-ribosyl cyclase family. In terms of assembly, homodimer. In terms of tissue distribution, pancreatic islets, kidney, spleen, heart, thymus, intestine and salivary gland.

It localises to the cell membrane. The catalysed reaction is NAD(+) + H2O = ADP-D-ribose + nicotinamide + H(+). The enzyme catalyses NAD(+) = cyclic ADP-beta-D-ribose + nicotinamide + H(+). It catalyses the reaction cyclic ADP-beta-D-ribose + H2O = ADP-D-ribose. Catalyzes both the synthesis of cyclic ADP-beta-D-ribose (cADPR) from NAD(+), and its hydrolysis to ADP-D-ribose (ADPR). Cyclic ADPR is known to serve as an endogenous second messenger that elicits calcium release from intracellular stores, and thus regulates the mobilization of intracellular calcium. May be involved in pre-B-cell growth. In Rattus norvegicus (Rat), this protein is ADP-ribosyl cyclase/cyclic ADP-ribose hydrolase 2 (Bst1).